The sequence spans 283 residues: Flagellar filament 35 kDa core protein (283 aa).

Belongs to the bacterial flagellin family. The flagellum consists of two outer layers around a core that contains several antigenically related polypeptides.

It is found in the periplasmic flagellum. The protein resides in the periplasm. Component of the core of the flagella. This Leptospira interrogans serogroup Icterohaemorrhagiae serovar copenhageni (strain Fiocruz L1-130) protein is Flagellar filament 35 kDa core protein (flaB).